Reading from the N-terminus, the 993-residue chain is Signal peptide, CUB and EGF-like domain-containing protein 3 (993 aa).

An N-terminal signal peptide occupies residues 1–20; that stretch reads MGSGRVPGLCLLLLLVHARA. The EGF-like 1; calcium-binding domain maps to 29–69; the sequence is DVDECVEGTDNCHIDAICQNTPRSYKCICKSGYTGDGKHCK. 26 disulfide bridges follow: cysteine 33–cysteine 46, cysteine 40–cysteine 55, cysteine 57–cysteine 68, cysteine 74–cysteine 86, cysteine 82–cysteine 95, cysteine 97–cysteine 110, cysteine 116–cysteine 127, cysteine 123–cysteine 136, cysteine 161–cysteine 172, cysteine 168–cysteine 182, cysteine 184–cysteine 197, cysteine 201–cysteine 212, cysteine 208–cysteine 221, cysteine 223–cysteine 236, cysteine 240–cysteine 251, cysteine 247–cysteine 260, cysteine 262–cysteine 275, cysteine 281–cysteine 292, cysteine 288–cysteine 301, cysteine 303–cysteine 316, cysteine 322–cysteine 332, cysteine 328–cysteine 341, cysteine 343–cysteine 355, cysteine 361–cysteine 372, cysteine 368–cysteine 381, and cysteine 383–cysteine 397. One can recognise an EGF-like 2; calcium-binding domain in the interval 70 to 111; sequence DVDECEREDNAGCVHDCVNIPGNYRCTCYDGFHLAHDGHNCL. Residues 112–148 form the EGF-like 3; calcium-binding domain; that stretch reads DVDECAEGNGGCQQSCVNMMGSYECHCRDGFFLSDNQ. 3 EGF-like domains span residues 157-198, 199-237, and 238-276; these read EGMN…RDCK, LTCNYGNGGCQHTCDDTEQGPRCGCHVKFVLHTDGKTCI, and ETCAVNNGGCDSKCHDAATGVHCSCPVGFMLQPDRKTCK. Residues 277-317 enclose the EGF-like 7; calcium-binding domain; it reads DIDECRLNNGGCDHICRNTVGSFECSCKKGYKLLINERSCQ. The EGF-like 8; calcium-binding domain occupies 318-356; it reads DIDECSFDRTCDHMCVNTPGSFQCLCHRGYLLYGVTHCG. The 42-residue stretch at 357–398 folds into the EGF-like 9; calcium-binding domain; sequence DVDECSINKGGCRFGCINTPGSYQCTCPAGQGRLHWNGKDCT. N-linked (GlcNAc...) asparagine glycans are attached at residues asparagine 417, asparagine 464, asparagine 685, asparagine 756, and asparagine 785. Disulfide bonds link cysteine 804–cysteine 830 and cysteine 857–cysteine 878. One can recognise a CUB domain in the interval 804 to 916; the sequence is CGGELGEFTG…RGFQIPYVTY (113 aa).

As to quaternary structure, forms homooligomers. Forms heterooligomers with SCUBE1 and SCUBE2. Interacts with TGFBR2 through the CUB domain; this interaction does not affect TGFB1-binding to TGFBR2. Interacts with BMP2, BMP4 and BMP7; the interaction is mediated by the CUB domain. Interacts with BMPR1A, BMPR1B and BMPR2; the interaction with BMPR1A and BMPR1B is BMP2- and BMP4-dependent. N-glycosylated. In terms of processing, proteolytic cleavage produces a CUB-containing C-terminal fragment that retains the ability to bind to TGFBR2. This reaction is catalyzed in vitro by MMP2 and, to a lesser extent, by MMP9. In terms of tissue distribution, highly expressed in femur and humerus with little or no expression in non-bone tissues.

It localises to the secreted. The protein resides in the cell surface. Is a positive regulator of the BMP signaling pathway, required for proper chondrogenesis, osteogenesis and skeletal development. It acts as a coreceptor for BMP ligands, particularly BMP2 and BMP4, facilitating their interactions with BMP type I receptors. It is required for ligand-induced recruitment of BMP receptors to lipid rafts. Binds to TGFBR2 and activates TGFB signaling. This Mus musculus (Mouse) protein is Signal peptide, CUB and EGF-like domain-containing protein 3.